Here is a 445-residue protein sequence, read N- to C-terminus: Arabinooligosaccharide-binding protein (445 aa).

Residues M1 to A20 form the signal peptide. C21 carries N-palmitoyl cysteine lipidation. C21 is lipidated: S-diacylglycerol cysteine.

Belongs to the bacterial solute-binding protein 1 family. As to quaternary structure, the complex is composed of two ATP-binding proteins (MsmX), two transmembrane proteins (AraP and AraQ) and a solute-binding protein (AraN).

Its subcellular location is the cell membrane. Its function is as follows. Part of the ABC transporter complex AraNPQ involved in the uptake of arabinooligosaccharides. AraN captures the substrate and delivers it to the two transmembrane components. The chain is Arabinooligosaccharide-binding protein (araN) from Halalkalibacterium halodurans (strain ATCC BAA-125 / DSM 18197 / FERM 7344 / JCM 9153 / C-125) (Bacillus halodurans).